We begin with the raw amino-acid sequence, 248 residues long: Granulin (248 aa).

The protein belongs to the polyhedrin family.

Its function is as follows. Component of the virus occlusion bodies, which are large proteinaceous structures, that protect the virus from the outside environment for extended periods until they are ingested by insect larvae. The protein is Granulin of Zygaenidae (burnets).